Reading from the N-terminus, the 84-residue chain is Cell division topological specificity factor (84 aa).

This sequence belongs to the MinE family.

Its function is as follows. Prevents the cell division inhibition by proteins MinC and MinD at internal division sites while permitting inhibition at polar sites. This ensures cell division at the proper site by restricting the formation of a division septum at the midpoint of the long axis of the cell. In Cupriavidus taiwanensis (strain DSM 17343 / BCRC 17206 / CCUG 44338 / CIP 107171 / LMG 19424 / R1) (Ralstonia taiwanensis (strain LMG 19424)), this protein is Cell division topological specificity factor.